Consider the following 540-residue polypeptide: Putative cysteine ligase BshC (540 aa).

The stretch at 457-477 (EKNRAFIQGQIAFLKERMERE) forms a coiled coil.

The protein belongs to the BshC family.

Its function is as follows. Involved in bacillithiol (BSH) biosynthesis. May catalyze the last step of the pathway, the addition of cysteine to glucosamine malate (GlcN-Mal) to generate BSH. The chain is Putative cysteine ligase BshC from Shouchella clausii (strain KSM-K16) (Alkalihalobacillus clausii).